The chain runs to 209 residues: Thymidine kinase (209 aa).

ATP is bound by residues 25 to 32 (GCMFAGKT) and 103 to 106 (DEVQ). The active-site Proton acceptor is the Glu104. Residues Cys160, Cys163, Cys198, and Cys201 each contribute to the Zn(2+) site.

This sequence belongs to the thymidine kinase family. As to quaternary structure, homotetramer.

The protein resides in the cytoplasm. The catalysed reaction is thymidine + ATP = dTMP + ADP + H(+). The chain is Thymidine kinase from Mycoplasma mycoides subsp. mycoides SC (strain CCUG 32753 / NCTC 10114 / PG1).